The sequence spans 483 residues: Phloretin 2'-O-glucosyltransferase (483 aa).

The Proton acceptor role is filled by His-15. His-15 lines the an anthocyanidin pocket. The active-site Charge relay is the Asp-118. UDP-alpha-D-glucose-binding residues include Thr-140, Ala-360, Gln-362, His-377, Trp-380, Asn-381, Ser-382, and Glu-385. An anthocyanidin is bound at residue Ala-400. Residues Glu-401 and Gln-402 each coordinate UDP-alpha-D-glucose.

The protein belongs to the UDP-glycosyltransferase family. In terms of tissue distribution, highly expressed in roots and at lower levels in leaves, flowers and fruits.

It catalyses the reaction phloretin + UDP-alpha-D-glucose = phlorizin + UDP + H(+). Its function is as follows. Glycosyltransferase that possesses phloretin 2'-O-glycosyltransferase activity. Converts phloretin to phlorizin (phloretin 2'-O-glucoside), a potent antioxidant. Is specific for phloretin and does not possess glycosyltransferase activity toward caffeic acid, catechin, chlorogenic acid, 2-coumaric acid, 3-coumaric acid, 4-coumaric acid, cyanidin, 3,4-dihydroxyhydrocinnamic acid, epicatechin, 3-hydroxybenzoic acid, naringenin, 3,4-dihydroxybenzoic acid, quercetin and rutin. Can glycosylate phloretin in the presence of UDP-glucose, UDP-xylose and UDP-galactose. The protein is Phloretin 2'-O-glucosyltransferase of Malus domestica (Apple).